Consider the following 478-residue polypeptide: Transposase for insertion sequence element IS231C (478 aa).

The protein belongs to the transposase 11 family.

In terms of biological role, involved in the transposition of the insertion sequence. In Bacillus thuringiensis subsp. berliner, this protein is Transposase for insertion sequence element IS231C.